Consider the following 238-residue polypeptide: Ubiquinone biosynthesis O-methyltransferase (238 aa).

Arg-38, Gly-58, Asp-79, and Met-124 together coordinate S-adenosyl-L-methionine.

This sequence belongs to the methyltransferase superfamily. UbiG/COQ3 family.

It carries out the reaction a 3-demethylubiquinol + S-adenosyl-L-methionine = a ubiquinol + S-adenosyl-L-homocysteine + H(+). The catalysed reaction is a 3-(all-trans-polyprenyl)benzene-1,2-diol + S-adenosyl-L-methionine = a 2-methoxy-6-(all-trans-polyprenyl)phenol + S-adenosyl-L-homocysteine + H(+). Its pathway is cofactor biosynthesis; ubiquinone biosynthesis. Its function is as follows. O-methyltransferase that catalyzes the 2 O-methylation steps in the ubiquinone biosynthetic pathway. The chain is Ubiquinone biosynthesis O-methyltransferase from Acinetobacter baylyi (strain ATCC 33305 / BD413 / ADP1).